Reading from the N-terminus, the 352-residue chain is Rhodopsin (352 aa).

The Extracellular portion of the chain corresponds to 1–36 (MNGTEGPFFYIPMVNTTGVVRSPYEYPQYYLVNPAA). N-linked (GlcNAc...) asparagine glycosylation is found at Asn2 and Asn15. The chain crosses the membrane as a helical span at residues 37-61 (YACLGAYMFFLILVGFPVNFLTLYV). The Cytoplasmic portion of the chain corresponds to 62 to 73 (TLEHKKLRTPLN). The chain crosses the membrane as a helical span at residues 74–96 (YILLNLAVADLFMVFGGFTTTIY). Residues 97–110 (TSMHGYFVLGRLGC) are Extracellular-facing. Cys110 and Cys187 are oxidised to a cystine. Residues 111-133 (NIEGFFATLGGEIALWSLVVLAI) traverse the membrane as a helical segment. The 'Ionic lock' involved in activated form stabilization signature appears at 134 to 136 (ERW). The Cytoplasmic portion of the chain corresponds to 134 to 152 (ERWVVVCKPISNFRFGENH). Residues 153–173 (AIMGVAFTWFMASACAVPPLV) form a helical membrane-spanning segment. At 174 to 202 (GWSRYIPEGMQCSCGIDYYTRAEGFNNES) the chain is on the extracellular side. An N-linked (GlcNAc...) asparagine glycan is attached at Asn200. Residues 203–224 (FVIYMFTVHFCIPLAVVGFCYG) traverse the membrane as a helical segment. Residues 225–252 (RLLCAVKEAAAAQQESETTQRAEREVSR) lie on the Cytoplasmic side of the membrane. A helical transmembrane segment spans residues 253 to 274 (MVVIMVIGFLVCWLPYASVAWY). At 275 to 286 (IFTHQGSEFGPL) the chain is on the extracellular side. The helical transmembrane segment at 287–308 (FMTIPAFFAKSSSIYNPMIYIC) threads the bilayer. Lys296 is modified (N6-(retinylidene)lysine). The Cytoplasmic portion of the chain corresponds to 309–352 (MNKQFRHCMITTLCCGKNPFEEEEGASTTKTEASSVSSSSVSPA). S-palmitoyl cysteine attachment occurs at residues Cys322 and Cys323. A disordered region spans residues 331–352 (EEGASTTKTEASSVSSSSVSPA). Residues 342–352 (SSVSSSSVSPA) are compositionally biased toward low complexity.

This sequence belongs to the G-protein coupled receptor 1 family. Opsin subfamily. In terms of processing, phosphorylated on some or all of the serine and threonine residues present in the C-terminal region. Contains one covalently linked retinal chromophore.

The protein localises to the membrane. It localises to the cell projection. It is found in the cilium. The protein resides in the photoreceptor outer segment. In terms of biological role, photoreceptor required for image-forming vision at low light intensity. While most salt water fish species use retinal as chromophore, most freshwater fish use 3-dehydroretinal, or a mixture of retinal and 3-dehydroretinal. Light-induced isomerization of 11-cis to all-trans retinal triggers a conformational change that activates signaling via G-proteins. Subsequent receptor phosphorylation mediates displacement of the bound G-protein alpha subunit by arrestin and terminates signaling. This chain is Rhodopsin (rho), found in Gobius niger (Black goby).